Consider the following 228-residue polypeptide: Pyridoxal phosphate homeostasis protein (228 aa).

At K35 the chain carries N6-(pyridoxal phosphate)lysine.

The protein belongs to the pyridoxal phosphate-binding protein YggS/PROSC family.

Functionally, pyridoxal 5'-phosphate (PLP)-binding protein, which is involved in PLP homeostasis. This Aquifex aeolicus (strain VF5) protein is Pyridoxal phosphate homeostasis protein.